Reading from the N-terminus, the 269-residue chain is Tryptophan synthase alpha chain (269 aa).

Active-site proton acceptor residues include Glu50 and Asp61.

The protein belongs to the TrpA family. In terms of assembly, tetramer of two alpha and two beta chains.

It carries out the reaction (1S,2R)-1-C-(indol-3-yl)glycerol 3-phosphate + L-serine = D-glyceraldehyde 3-phosphate + L-tryptophan + H2O. It participates in amino-acid biosynthesis; L-tryptophan biosynthesis; L-tryptophan from chorismate: step 5/5. Its function is as follows. The alpha subunit is responsible for the aldol cleavage of indoleglycerol phosphate to indole and glyceraldehyde 3-phosphate. In Francisella tularensis subsp. tularensis (strain FSC 198), this protein is Tryptophan synthase alpha chain.